The chain runs to 370 residues: Protein rough sheath 2 (370 aa).

2 HTH myb-type domains span residues 1–53 (MKER…KNYL) and 54–108 (RPGI…EKQQ). 2 DNA-binding regions (H-T-H motif) span residues 27 to 53 (WHLV…KNYL) and 81 to 104 (WKKI…EVFK). The segment at 107–129 (QQRELRDSRRPPPEPSPDERGRY) is disordered. Residues 276–340 (KRVEQQLEME…QVKEEKMAEQ (65 aa)) are a coiled coil.

In terms of assembly, homodimer. Interacts with AS2, WRKY1, HIRA, a probable histone chaperone, and RIK, a predicted RNA binding protein. In terms of tissue distribution, expressed in lateral organ promordia.

The protein resides in the nucleus. Functionally, transcription factor required for normal cell differentiation. Interacts directly with asymmetric leaves 2 (AS2) to repress the knox homeobox genes. The sequence is that of Protein rough sheath 2 (RS2) from Zea mays (Maize).